The chain runs to 520 residues: Glucose starvation modulator protein 1 (520 aa).

A DNA-binding region (zn(2)-C6 fungal-type) is located at residues 20–48; sequence CVFCHEKHLQCSNERPCKNCVKRGLAHEC. One can recognise a PAS domain in the interval 376–445; the sequence is DYEKLSQLNS…FRLFKTVAVG (70 aa).

This sequence belongs to the ERT1/acuK family.

It is found in the nucleus. Transcription factor which regulates nonfermentable carbon utilization. The chain is Glucose starvation modulator protein 1 (GSM1) from Scheffersomyces stipitis (strain ATCC 58785 / CBS 6054 / NBRC 10063 / NRRL Y-11545) (Yeast).